Here is a 538-residue protein sequence, read N- to C-terminus: Translation initiation factor IF-3, chloroplastic (538 aa).

The transit peptide at 1-140 (MVRSSCLQCD…VTQRKEIAVF (140 aa)) directs the protein to the chloroplast. A head region spans residues 141 to 290 (SASGQAAEPE…EEVEEEQEVL (150 aa)). Disordered regions lie at residues 146–165 (AAEPEGAEPLKRPFPSPAAK) and 188–210 (RTDSTYGRGPRSTSFTDISNWPS). The segment at 291–474 (SWADRRRALA…LILNLAPAGE (184 aa)) is IF-3 like. The disordered stretch occupies residues 484–538 (AERDRKAAAEEEGEGDDLDFVDENEDEDVEGEGEEEEAEELEEETAEGTEVPTRS). Residues 493-530 (EEEGEGDDLDFVDENEDEDVEGEGEEEEAEELEEETAE) are compositionally biased toward acidic residues.

This sequence belongs to the IF-3 family. In terms of assembly, monomer. Post-translationally, the N-terminus is blocked.

The protein localises to the plastid. It localises to the chloroplast. Functionally, involved in chloroplast protein synthesis. It enhances the poly(A,U,G)-dependent binding of the initiator tRNA to chloroplast 30S subunits. The polypeptide is Translation initiation factor IF-3, chloroplastic (Euglena gracilis).